An 88-amino-acid chain; its full sequence is Small ribosomal subunit protein bS16c (88 aa).

This sequence belongs to the bacterial ribosomal protein bS16 family.

It localises to the plastid. The protein resides in the chloroplast. The sequence is that of Small ribosomal subunit protein bS16c from Calycanthus floridus var. glaucus (Eastern sweetshrub).